An 808-amino-acid chain; its full sequence is Phospholipase D alpha 1 (808 aa).

A C2 domain is found at 1 to 125 (MSKVLLHGTL…LDGDEVDKWI (125 aa)). Asp186 is a Ca(2+) binding site. The PLD phosphodiesterase 1 domain maps to 326–364 (TMFTHHQKIVVVDHELPRGGSQKRRVMSFVGGIDLCDGR). Catalysis depends on residues His331, Lys333, and Asp338. Residue His331 participates in a 1,2-diacyl-sn-glycero-3-phosphate binding. 2 residues coordinate Ca(2+): His370 and His404. A 1,2-diacyl-sn-glycero-3-phosphate-binding residues include Gln520 and His659. In terms of domain architecture, PLD phosphodiesterase 2 spans 654–681 (FMIYVHSKMMIVDDEYIIVGSANINQRS). Catalysis depends on residues His659, Lys661, and Asp666. Ca(2+) is bound at residue Glu720.

It belongs to the phospholipase D family. C2-PLD subfamily. In terms of assembly, interacts (via C2 domain) with CARDA (via RGD or KGE motifs). The cofactor is Ca(2+).

The catalysed reaction is a 1,2-diacyl-sn-glycero-3-phosphocholine + H2O = a 1,2-diacyl-sn-glycero-3-phosphate + choline + H(+). Its function is as follows. Hydrolyzes glycerol-phospholipids at the terminal phosphodiesteric bond. Plays an important role in various cellular processes. This Cynara cardunculus (Cardoon) protein is Phospholipase D alpha 1.